The following is a 579-amino-acid chain: Putative truncated flagellar export/assembly protein LfhA (579 aa).

The next 3 membrane-spanning stretches (helical) occupy residues 86 to 106 (AIAG…IGIF), 124 to 144 (IGDG…AAII), and 177 to 197 (FVLA…SALL).

This sequence belongs to the FHIPEP (flagella/HR/invasion proteins export pore) family.

The protein resides in the cell inner membrane. This is Putative truncated flagellar export/assembly protein LfhA from Escherichia coli (strain K12).